The sequence spans 572 residues: Asparagine--tRNA ligase, cytoplasmic 1 (572 aa).

Ala2 carries the post-translational modification N-acetylalanine. Residues 53–131 constitute a DNA-binding region (OB); that stretch reads VRIGGWVKSG…QQIELNVVKV (79 aa). Residues 236–292 form the WHEP-TRS domain; it reads DVEAARLIVIERGNVVAELKAAKASKEAITAAVAELKIAKETFAHIDERSRLRPGLP.

The protein belongs to the class-II aminoacyl-tRNA synthetase family.

The protein resides in the cytoplasm. The protein localises to the cytosol. It carries out the reaction tRNA(Asn) + L-asparagine + ATP = L-asparaginyl-tRNA(Asn) + AMP + diphosphate + H(+). This chain is Asparagine--tRNA ligase, cytoplasmic 1, found in Arabidopsis thaliana (Mouse-ear cress).